The following is a 527-amino-acid chain: Glucose-6-phosphate isomerase (527 aa).

The active-site Proton donor is glutamate 323. Catalysis depends on residues histidine 352 and lysine 454.

This sequence belongs to the GPI family.

The protein localises to the cytoplasm. It carries out the reaction alpha-D-glucose 6-phosphate = beta-D-fructose 6-phosphate. The protein operates within carbohydrate biosynthesis; gluconeogenesis. It functions in the pathway carbohydrate degradation; glycolysis; D-glyceraldehyde 3-phosphate and glycerone phosphate from D-glucose: step 2/4. Functionally, catalyzes the reversible isomerization of glucose-6-phosphate to fructose-6-phosphate. This chain is Glucose-6-phosphate isomerase, found in Prochlorococcus marinus (strain MIT 9312).